The primary structure comprises 375 residues: L-asparaginase 2 (375 aa).

A signal peptide spans 1–19 (MKKQRMLVLFTALLFVFTG). The tract at residues 22-46 (HSPETKESPKEKAQTQKVSSASASE) is disordered. The segment covering 24–35 (PETKESPKEKAQ) has biased composition (basic and acidic residues). The Asparaginase/glutaminase domain occupies 51 to 375 (PNIRILATGG…QKIQAYFNEY (325 aa)). Thr61 (O-isoaspartyl threonine intermediate) is an active-site residue. Residues Ser108 and 141 to 142 (TD) each bind substrate.

Belongs to the asparaginase 1 family. In terms of assembly, homotetramer.

The catalysed reaction is L-asparagine + H2O = L-aspartate + NH4(+). In terms of biological role, catalyzes the conversion of L-asparagine to L-aspartate and ammonium. This Bacillus subtilis (strain 168) protein is L-asparaginase 2 (ansZ).